The primary structure comprises 894 residues: Protein SEY1 homolog (894 aa).

2 stretches are compositionally biased toward low complexity: residues 1-10 and 36-48; these read MSEEITTNQT and VQEQ…QEQQ. The segment at 1 to 97 is disordered; that stretch reads MSEEITTNQT…QKQQTQEQEH (97 aa). The Cytoplasmic portion of the chain corresponds to 1–800; it reads MSEEITTNQT…EQNRLTSGGG (800 aa). The stretch at 21–60 forms a coiled coil; it reads RLSNENIKQEDEEQQVQEQQEQQQQEQQEQIDDQDTQQQE. A compositionally biased stretch (acidic residues) spans 49–65; it reads EQIDDQDTQQQEDEFVV. Residues 78 to 93 show a composition bias toward low complexity; the sequence is TPTLQETPQQQKQQTQ. The GB1/RHD3-type G domain maps to 138–361; the sequence is GFDYSVISIL…ADSFIPKRKY (224 aa). 148–155 contacts GTP; it reads GPQSSGKS. Residues 801–821 traverse the membrane as a helical segment; the sequence is VPGYMIILLCVLGFNEFISII. Topologically, residues 822–824 are lumenal; the sequence is SSP. The helical transmembrane segment at 825 to 845 threads the bilayer; the sequence is LLLLLTILLGGVGFVLFKLGL. Over 846–894 the chain is Cytoplasmic; that stretch reads AGPFIDYSSQILVHFISKVKDIVLHVEQLQEQNHNNNNNNNNTPKQKRE.

The protein belongs to the TRAFAC class dynamin-like GTPase superfamily. GB1/RHD3 GTPase family. RHD3 subfamily.

It localises to the endoplasmic reticulum membrane. Probable GTP-binding protein that may be involved in cell development. This is Protein SEY1 homolog from Dictyostelium discoideum (Social amoeba).